The chain runs to 436 residues: Anaerobic glycerol-3-phosphate dehydrogenase subunit B (436 aa).

Belongs to the anaerobic G-3-P dehydrogenase subunit B family. As to quaternary structure, composed of a catalytic GlpA/B dimer and of membrane bound GlpC. It depends on FMN as a cofactor.

It catalyses the reaction a quinone + sn-glycerol 3-phosphate = dihydroxyacetone phosphate + a quinol. Its pathway is polyol metabolism; glycerol degradation via glycerol kinase pathway; glycerone phosphate from sn-glycerol 3-phosphate (anaerobic route): step 1/1. In terms of biological role, conversion of glycerol 3-phosphate to dihydroxyacetone. Uses fumarate or nitrate as electron acceptor. The protein is Anaerobic glycerol-3-phosphate dehydrogenase subunit B of Vibrio cholerae serotype O1 (strain ATCC 39541 / Classical Ogawa 395 / O395).